The primary structure comprises 406 residues: uncharacterized protein (406 aa).

This is an uncharacterized protein from Acanthamoeba polyphaga mimivirus (APMV).